Reading from the N-terminus, the 513-residue chain is GMP synthase [glutamine-hydrolyzing] (513 aa).

The 190-residue stretch at 9–198 folds into the Glutamine amidotransferase type-1 domain; the sequence is LILVLDFGSQ…VRRVCDCKGQ (190 aa). Cys86 functions as the Nucleophile in the catalytic mechanism. Residues His172 and Glu174 contribute to the active site. One can recognise a GMPS ATP-PPase domain in the interval 199–388; the sequence is WTMENFIEIE…LGIPEHLVWR (190 aa). 226 to 232 is a binding site for ATP; sequence SGGVDSS.

In terms of assembly, homodimer.

It catalyses the reaction XMP + L-glutamine + ATP + H2O = GMP + L-glutamate + AMP + diphosphate + 2 H(+). It participates in purine metabolism; GMP biosynthesis; GMP from XMP (L-Gln route): step 1/1. In terms of biological role, catalyzes the synthesis of GMP from XMP. This Staphylococcus aureus (strain Mu3 / ATCC 700698) protein is GMP synthase [glutamine-hydrolyzing].